A 416-amino-acid polypeptide reads, in one-letter code: MGVLRHVVCAMSGGVDSSVSALLLKRMGYHVTGVFMKNWDSQEEKGLCSSDRDCEDAYKVCKMLDIPFHEVSYVKEYWHEVFSNLLWEYERGRTPNPDIICNKHIKFKHFYQYAVNTLGADAMATGHYARTSQEDEEVFQQKLTEAPKSLFRDRFEIRKPVRLYQGADLLKDQTFFLSQISQDALRHTLFPLAGLTKGYVKKIAAEAGFQHVLKKKESMGICFIGKRDFENFILEYLEPRPGNFVSIEDGQIMGKHKGWFTLTLGQRARIGGRADAWFVVDKDVTTADVFVCPSTFHPALFRDTLQTDRFHWIAEEPPAELVHTQMMDCHFCFNNRMPLTPCTVTLNLDGSVWVMVKEPMRGMATGQFAVLYKGHECLGSGKIIRLGPTKFALQKDQSNTNCLHKDTNQQHPEPHS.

ATP-binding positions include 10 to 17 (AMSGGVDS) and M36. The tract at residues 96–98 (NPD) is interaction with target base in tRNA. The active-site Nucleophile is C101. A disulfide bond links C101 and C222. G126 is an ATP binding site. Residues 171–173 (KDQ) are interaction with tRNA. C222 serves as the catalytic Cysteine persulfide intermediate. The segment at 334–335 (NN) is interaction with tRNA. The disordered stretch occupies residues 397-416 (QSNTNCLHKDTNQQHPEPHS). Basic and acidic residues predominate over residues 403-416 (LHKDTNQQHPEPHS).

It belongs to the MnmA/TRMU family.

It is found in the mitochondrion. It carries out the reaction 5-taurinomethyluridine(34) in tRNA + S-sulfanyl-L-cysteinyl-[protein] + AH2 + ATP = 5-taurinomethyl-2-thiouridine(34) in tRNA + L-cysteinyl-[protein] + A + AMP + diphosphate + H(+). Functionally, catalyzes the 2-thiolation of uridine at the wobble position (U34) of mitochondrial tRNA(Lys), tRNA(Glu) and tRNA(Gln). Required for the formation of 5-taurinomethyl-2-thiouridine (tm5s2U) of mitochondrial tRNA(Lys), tRNA(Glu), and tRNA(Gln) at the wobble position. ATP is required to activate the C2 atom of the wobble base. The sequence is that of Mitochondrial tRNA-specific 2-thiouridylase 1 (trmu) from Danio rerio (Zebrafish).